Reading from the N-terminus, the 243-residue chain is UDP-2,3-diacylglucosamine hydrolase (243 aa).

Aspartate 9, histidine 11, aspartate 42, asparagine 79, and histidine 114 together coordinate Mn(2+). Position 79–80 (79–80 (NR)) interacts with substrate. Substrate is bound by residues aspartate 122, serine 160, asparagine 164, and histidine 195. Positions 195 and 197 each coordinate Mn(2+).

Belongs to the LpxH family. Mn(2+) is required as a cofactor.

The protein resides in the cell inner membrane. The catalysed reaction is UDP-2-N,3-O-bis[(3R)-3-hydroxytetradecanoyl]-alpha-D-glucosamine + H2O = 2-N,3-O-bis[(3R)-3-hydroxytetradecanoyl]-alpha-D-glucosaminyl 1-phosphate + UMP + 2 H(+). The protein operates within glycolipid biosynthesis; lipid IV(A) biosynthesis; lipid IV(A) from (3R)-3-hydroxytetradecanoyl-[acyl-carrier-protein] and UDP-N-acetyl-alpha-D-glucosamine: step 4/6. Hydrolyzes the pyrophosphate bond of UDP-2,3-diacylglucosamine to yield 2,3-diacylglucosamine 1-phosphate (lipid X) and UMP by catalyzing the attack of water at the alpha-P atom. Involved in the biosynthesis of lipid A, a phosphorylated glycolipid that anchors the lipopolysaccharide to the outer membrane of the cell. In Coxiella burnetii (strain Dugway 5J108-111), this protein is UDP-2,3-diacylglucosamine hydrolase.